The chain runs to 428 residues: GTPase Obg (428 aa).

The 158-residue stretch at 1-158 folds into the Obg domain; sequence MFVDQVQVEV…RFIKLELKVL (158 aa). The OBG-type G domain maps to 159–333; sequence ADVGLVGFPS…LMHKTAEVLK (175 aa). Residues 165–172, 190–194, 212–215, 282–285, and 314–316 each bind GTP; these read GFPSVGKS, FTTLV, DLPG, TKMD, and SSL. Positions 172 and 192 each coordinate Mg(2+). Residues 350–428 form the OCT domain; sequence YKYQPEPALK…IDDFTFEFVE (79 aa).

It belongs to the TRAFAC class OBG-HflX-like GTPase superfamily. OBG GTPase family. Monomer. Requires Mg(2+) as cofactor.

It is found in the cytoplasm. An essential GTPase which binds GTP, GDP and possibly (p)ppGpp with moderate affinity, with high nucleotide exchange rates and a fairly low GTP hydrolysis rate. Plays a role in control of the cell cycle, stress response, ribosome biogenesis and in those bacteria that undergo differentiation, in morphogenesis control. The chain is GTPase Obg from Lacticaseibacillus paracasei (strain ATCC 334 / BCRC 17002 / CCUG 31169 / CIP 107868 / KCTC 3260 / NRRL B-441) (Lactobacillus paracasei).